The following is a 48-amino-acid chain: MGKFPEAEERLLNVKICMRCNARNAVRATTCRKCGYQNLRPKNKERKA.

It belongs to the eukaryotic ribosomal protein eL40 family.

This chain is Large ribosomal subunit protein eL40, found in Methanosphaerula palustris (strain ATCC BAA-1556 / DSM 19958 / E1-9c).